A 470-amino-acid chain; its full sequence is MLLPLFFFFLHLHLHLSSSSSISFPDFQIIDVLQPPLTVTATLPDFNNTHFSDESSSKYTLRLLHRDRFPSVTYRNHHHRLHARMRRDTDRVSAILRRISGKVIPSSDSRYEVNDFGSDIVSGMDQGSGEYFVRIGVGSPPRDQYMVIDSGSDMVWVQCQPCKLCYKQSDPVFDPAKSGSYTGVSCGSSVCDRIENSGCHSGGCRYEVMYGDGSYTKGTLALETLTFAKTVVRNVAMGCGHRNRGMFIGAAGLLGIGGGSMSFVGQLSGQTGGAFGYCLVSRGTDSTGSLVFGREALPVGASWVPLVRNPRAPSFYYVGLKGLGVGGVRIPLPDGVFDLTETGDGGVVMDTGTAVTRLPTAAYVAFRDGFKSQTANLPRASGVSIFDTCYDLSGFVSVRVPTVSFYFTEGPVLTLPARNFLMPVDDSGTYCFAFAASPTGLSIIGNIQQEGIQVSFDGANGFVGFGPNVC.

Residues 1-19 (MLLPLFFFFLHLHLHLSSS) form the signal peptide. The Peptidase A1 domain occupies 131–466 (YFVRIGVGSP…DGANGFVGFG (336 aa)). Asp149 is a catalytic residue. Disulfide bonds link Cys159–Cys162, Cys165–Cys239, Cys186–Cys204, Cys191–Cys199, Cys278–Cys470, and Cys389–Cys431. The active site involves Asp350.

It belongs to the peptidase A1 family.

In terms of biological role, aspartic protease that may be involved in drought avoidance through abscisic acid signaling. This is Protein ASPARTIC PROTEASE IN GUARD CELL 2 (ASPG2) from Arabidopsis thaliana (Mouse-ear cress).